The primary structure comprises 238 residues: ATP-dependent Clp protease ATP-binding subunit CLPT1, chloroplastic (238 aa).

Residues 1–64 (MASYTVSFIP…VPKLRCLTSA (64 aa)) constitute a chloroplast transit peptide. The Clp R domain occupies 83-228 (IPKWSARAIK…KEVEKSMNED (146 aa)). Repeat regions lie at residues 86 to 151 (WSAR…LGKS) and 163 to 228 (LTEP…MNED).

Belongs to the ClpA/ClpB family. Monomer and homodimer. Binds to the CLP3-6 ring (P-ring). The dimers monomerize before association to the P-ring. Component of the chloroplastic Clp protease core complex which consist of at least 16 proteins: CLPP4 (3 copies), CLPP5 (3 copies), CLPR4 (2 copies), ClpP1 (1 copy), CLPP6 (1 copy), CLPR2 (1 copy), CLPT1 (1 copy), CLPT2 (1 copy) and 3 copies of CLPP3 and/or CLPR1 and/or CLPR3. Interacts with CLPC2 and CLPD. Interacts with CPN21. No interactions with CLPS1.

It localises to the plastid. The protein resides in the chloroplast. Its function is as follows. Accessory protein regulating the assembly of the plastidial Clp protease system. CLPT1 first binds to the heptameric P-ring containing the CLP3-6 subunits followed by CLPT2, and only then does the P-ring combine with the R-ring composed of the clpP1 and CLPR1-4 subunits. Once the core complex is fully assembled, it then associates to the CLPC chaperone partner to form the functional protease. CLPT1 and CLPT2 are partially redundant. In Arabidopsis thaliana (Mouse-ear cress), this protein is ATP-dependent Clp protease ATP-binding subunit CLPT1, chloroplastic.